Consider the following 485-residue polypeptide: Probable RNA-binding protein 46 (485 aa).

3 consecutive RRM domains span residues 61-139 (CEVF…VSLD), 141-223 (CRLF…WADP), and 236-308 (KVLY…LAKP).

In terms of assembly, interacts with YTHDC2, MEIOC, MOV10, CNOT6L, DDX4, UPF1 and PABPC1.

The protein localises to the cytoplasm. Essential for male and female fertility, playing a crucial role in regulating germ cell development by ensuring the proper progression of meiosis prophase I. Regulates mitotic-to-meiotic transition in spermatogenesis by forming a complex with MEIOC and YTHDC2 which recognizes and down-regulates mitotic transcripts for a successful meiotic entry. Required for normal synaptonemal complex formation during meiosis, binding meiotic cohesin subunit mRNAs containing GCCUAU/GUUCGA motifs in their 3'UTRs regions and positively regulating their translation. Required for spermatogonial differentiation in both developing and adult testis. The polypeptide is Probable RNA-binding protein 46 (RBM46) (Macaca fascicularis (Crab-eating macaque)).